Consider the following 273-residue polypeptide: UPF0380 protein YfjQ (273 aa).

The protein belongs to the UPF0380 family.

This Escherichia coli (strain K12) protein is UPF0380 protein YfjQ (yfjQ).